The primary structure comprises 624 residues: MSDGDILRSTFPSYMAEGERLYLCGEFTKAIQSFTNALHLQSGDKNCLVARSKCYLKMGDLEKSLNDAEASLRNDPTFCKGILQKAETLYTMGDFEFALVFYHRGYKLRPDREFKVGIQKAQEAINNSVGSPSSIKLENKGDLSFLSKQAESKKAQQKHLPIKQLSYSTKHEIKRKGSLKSEKTVRQLLGELYVDKEYLEKLLLDEDLIKGTIKSGLTVEDLIMTGINYLDTRSNFWRQQKPIYARERDRKLMQEKWLRDRKRSPSQTAHYILKSLEDIDMLLTSGSADGSLQKAEKVLKKVLEWNQEEVPNKDELVGNLYSCIGNAQIELGQMVAALQSHRKDLEIAKEHDLPDAKSRALDNIGRVFARVGKFQQAIDTWEEKIPLAKTTLEKTWLFHEIGRCYLELDQAWQAQSYGEKSQQYAEEEGDLEWQLNASVLVAQAQVKLRDFESAVNNFEKALERAKLVHNNEAQQAIISALDDANKGIIEELKKTNYREILREKAERQDIMSQMDLQGASEKEPLRGREEQERVVKQWERDQESEREATDDEQDRKSSGGLSKKLLGDGHSSNLGIRRESREIYRRLSDYSSHLPSEDGSQKQEKKQAEAAKGEVQKLEKTKEE.

TPR repeat units follow at residues 11-44 (FPSY…QSGD), 46-78 (NCLV…DPTF), 79-112 (CKGI…RPDR), 273-309 (LKSL…NQEE), 318-351 (GNLY…AKEH), 358-391 (SRAL…AKTT), 395-428 (TWLF…AEEE), and 435-468 (LNAS…AKLV). The segment at 511–624 (MSQMDLQGAS…VQKLEKTKEE (114 aa)) is disordered. Composition is skewed to basic and acidic residues over residues 520 to 557 (SEKE…DRKS), 576 to 588 (IRRE…RRLS), and 595 to 624 (PSED…TKEE).

In terms of assembly, component of the outer dynein arm-docking complex along with ODAD1, ODAD2, and ODAD3. Interacts with ODAD1; this interaction may facilitate the recruitment and/or attachment of outer dynein arm docking complex proteins, including ODAD1, ODAD3 and ODAD2, to ciliary axonemes. Interacts with components of the IFT complex A, including IFT140, TTC21B/IFT139 and WDR19/IFT144, and the IFT complex B, including IFT46, IFT52 and IFT57. Interacts with CFAP53.

The protein localises to the cell projection. The protein resides in the cilium. It localises to the cytoplasm. It is found in the cytoskeleton. Its subcellular location is the cilium axoneme. In terms of biological role, component of the outer dynein arm-docking complex (ODA-DC) that mediates outer dynein arms (ODA) binding onto the doublet microtubule. Plays an essential role for the assembly of ODA-DC and for the docking of ODA in ciliary axoneme. The protein is Outer dynein arm-docking complex subunit 4 (Odad4) of Mus musculus (Mouse).